A 657-amino-acid polypeptide reads, in one-letter code: Threonine--tRNA ligase (657 aa).

Positions 7–70 (QQASIAITLP…LCDANIEIVT (64 aa)) constitute a TGS domain. The interval 253–555 (DHRKLGTELE…LIEHTAGNFP (303 aa)) is catalytic. Zn(2+) is bound by residues C351, H402, and H532.

It belongs to the class-II aminoacyl-tRNA synthetase family. As to quaternary structure, homodimer. The cofactor is Zn(2+).

The protein resides in the cytoplasm. It carries out the reaction tRNA(Thr) + L-threonine + ATP = L-threonyl-tRNA(Thr) + AMP + diphosphate + H(+). Its function is as follows. Catalyzes the attachment of threonine to tRNA(Thr) in a two-step reaction: L-threonine is first activated by ATP to form Thr-AMP and then transferred to the acceptor end of tRNA(Thr). Also edits incorrectly charged L-seryl-tRNA(Thr). This Chlorobium limicola (strain DSM 245 / NBRC 103803 / 6330) protein is Threonine--tRNA ligase.